A 244-amino-acid polypeptide reads, in one-letter code: Putative lipoprotein LprA (244 aa).

The signal sequence occupies residues 1 to 24 (MKHPPCSVVAAATAILAVVLAIGG). Residue C25 is the site of N-palmitoyl cysteine attachment. C25 carries S-diacylglycerol cysteine lipidation.

Belongs to the LppX/LprAFG lipoprotein family.

The protein resides in the cell membrane. The chain is Putative lipoprotein LprA (lprA) from Mycobacterium bovis (strain ATCC BAA-935 / AF2122/97).